The chain runs to 297 residues: 4-hydroxy-tetrahydrodipicolinate synthase (297 aa).

Threonine 47 is a pyruvate binding site. The active-site Proton donor/acceptor is tyrosine 136. Residue lysine 165 is the Schiff-base intermediate with substrate of the active site. Isoleucine 206 is a pyruvate binding site.

This sequence belongs to the DapA family. Homotetramer; dimer of dimers.

The protein resides in the cytoplasm. It carries out the reaction L-aspartate 4-semialdehyde + pyruvate = (2S,4S)-4-hydroxy-2,3,4,5-tetrahydrodipicolinate + H2O + H(+). It participates in amino-acid biosynthesis; L-lysine biosynthesis via DAP pathway; (S)-tetrahydrodipicolinate from L-aspartate: step 3/4. Functionally, catalyzes the condensation of (S)-aspartate-beta-semialdehyde [(S)-ASA] and pyruvate to 4-hydroxy-tetrahydrodipicolinate (HTPA). The polypeptide is 4-hydroxy-tetrahydrodipicolinate synthase (Campylobacter concisus (strain 13826)).